We begin with the raw amino-acid sequence, 336 residues long: Homeobox-leucine zipper protein HAT14 (336 aa).

Disordered regions lie at residues 53–141 and 160–194; these read RSLS…PDSV and SNKR…KLRL. The segment covering 64 to 81 has biased composition (basic and acidic residues); it reads EDEKKKPAPRAKKSDEFR. Residues 120 to 129 show a composition bias toward acidic residues; the sequence is VEEEEEEEEA. Low complexity predominate over residues 130-141; the sequence is VPSMSVSPPDSV. The span at 160–173 shows a compositional bias: basic and acidic residues; that stretch reads SNKRDIDDEVERSA. The homeobox DNA-binding region spans 187 to 246; the sequence is STRKKLRLSKDQSAFLEDSFKEHSTLNPKQKIALAKQLNLRPRQVEVWFQNRRARTKLKQ. The interval 254-275 is leucine-zipper; the sequence is LKRCCESLTEENRRLQKEVKEL.

This sequence belongs to the HD-ZIP homeobox family. Class II subfamily.

The protein localises to the nucleus. Probable transcription factor. The sequence is that of Homeobox-leucine zipper protein HAT14 (HAT14) from Arabidopsis thaliana (Mouse-ear cress).